We begin with the raw amino-acid sequence, 275 residues long: Trans-aconitate 2-methyltransferase (275 aa).

This sequence belongs to the methyltransferase superfamily. Tam family.

The protein resides in the cytoplasm. It catalyses the reaction trans-aconitate + S-adenosyl-L-methionine = (E)-3-(methoxycarbonyl)pent-2-enedioate + S-adenosyl-L-homocysteine. Its function is as follows. Catalyzes the S-adenosylmethionine monomethyl esterification of trans-aconitate. The sequence is that of Trans-aconitate 2-methyltransferase from Pseudomonas aeruginosa (strain ATCC 15692 / DSM 22644 / CIP 104116 / JCM 14847 / LMG 12228 / 1C / PRS 101 / PAO1).